Consider the following 141-residue polypeptide: Hemoglobin subunit alpha-1 (141 aa).

Residues 1-141 form the Globin domain; that stretch reads VLSPADKNNV…VSTVLTSKYR (141 aa). Histidine 58 lines the O2 pocket. Histidine 87 contributes to the heme b binding site.

The protein belongs to the globin family. As to quaternary structure, heterotetramer of two alpha chains and two beta chains. Red blood cells.

Functionally, involved in oxygen transport from the lung to the various peripheral tissues. This Varecia variegata (Black-and-white ruffed lemur) protein is Hemoglobin subunit alpha-1.